The chain runs to 431 residues: Divergent protein kinase domain 1B (431 aa).

The Cytoplasmic segment spans residues 1-30 (MRRLRRLVHLVLLCPFSKGLQGRLPGLRVK). The short motif at 5 to 6 (RR) is the May mediate ER retention element. The chain crosses the membrane as a helical span at residues 31 to 51 (YVLLVWLGIFVGSWMVYVHYS). Residues 52–431 (SYSELCRGHV…WREISNTNYS (380 aa)) lie on the Lumenal side of the membrane. Cystine bridges form between Cys57-Cys94 and Cys62-Cys117.

The protein belongs to the DIPK family. In terms of processing, among the many cysteines in the lumenal domain, most are probably involved in disulfide bonds.

The protein resides in the endoplasmic reticulum membrane. This chain is Divergent protein kinase domain 1B, found in Rattus norvegicus (Rat).